We begin with the raw amino-acid sequence, 289 residues long: Golgi to ER traffic protein 2 (289 aa).

A compositionally biased stretch (basic and acidic residues) spans 1–10; that stretch reads MSEVSEAEKR. The tract at residues 1 to 68 is disordered; sequence MSEVSEAEKR…LQRGSNSGQS (68 aa). The Cytoplasmic segment spans residues 1–153; sequence MSEVSEAEKR…VGVHQFQVRQ (153 aa). The segment covering 11 to 21 has biased composition (basic residues); it reads RILREKRKQKF. Residues 33–68 are compositionally biased toward polar residues; sequence ITTQQPGGASGDSTVTSAEISDNEGSLQRGSNSGQS. A helical transmembrane segment spans residues 154-173; the sequence is LKAYMLLLRWAILLPFIYYV. Over 174–196 the chain is Lumenal; sequence MHPGTAHWLHTSRFLHFVMEPRN. Residues 197–216 form a helical membrane-spanning segment; that stretch reads FFMVFTTFEVASISIYYQVL. Over 217–263 the chain is Cytoplasmic; it reads LTLERTNKVNSLSYSSKLVTWAGLVPDGMLPIDNLQGKVVVALHYWD. The chain crosses the membrane as a helical span at residues 264-284; it reads ILSMYLTDLSLCLVAAGLMKY. Topologically, residues 285 to 289 are lumenal; it reads YHAAP.

This sequence belongs to the GET2 family. In terms of assembly, component of the Golgi to ER traffic (GET) complex, which is composed of GET1, GET2 and GET3. Within the complex, GET1 and GET2 form a heterotetramer which is stabilized by phosphatidylinositol binding and which binds to the GET3 homodimer.

The protein resides in the endoplasmic reticulum membrane. Its subcellular location is the golgi apparatus membrane. Functionally, required for the post-translational delivery of tail-anchored (TA) proteins to the endoplasmic reticulum. Together with GET1, acts as a membrane receptor for soluble GET3, which recognizes and selectively binds the transmembrane domain of TA proteins in the cytosol. The GET complex cooperates with the HDEL receptor ERD2 to mediate the ATP-dependent retrieval of resident ER proteins that contain a C-terminal H-D-E-L retention signal from the Golgi to the ER. The sequence is that of Golgi to ER traffic protein 2 from Eremothecium gossypii (strain ATCC 10895 / CBS 109.51 / FGSC 9923 / NRRL Y-1056) (Yeast).